We begin with the raw amino-acid sequence, 343 residues long: GTPase Obg (343 aa).

One can recognise an Obg domain in the interval 1–159; the sequence is MQFIDHATIC…RQLRLELKLL (159 aa). In terms of domain architecture, OBG-type G spans 160 to 328; it reads AEVGLIGLPN…LLRLVWQWLD (169 aa). GTP contacts are provided by residues 166 to 173, 191 to 195, 213 to 216, 280 to 283, and 309 to 311; these read GLPNAGKS, FTTLV, DIPG, NKID, and SSA. Mg(2+)-binding residues include serine 173 and threonine 193.

Belongs to the TRAFAC class OBG-HflX-like GTPase superfamily. OBG GTPase family. As to quaternary structure, monomer. It depends on Mg(2+) as a cofactor.

It localises to the cytoplasm. Its function is as follows. An essential GTPase which binds GTP, GDP and possibly (p)ppGpp with moderate affinity, with high nucleotide exchange rates and a fairly low GTP hydrolysis rate. Plays a role in control of the cell cycle, stress response, ribosome biogenesis and in those bacteria that undergo differentiation, in morphogenesis control. The sequence is that of GTPase Obg from Synechococcus elongatus (strain ATCC 33912 / PCC 7942 / FACHB-805) (Anacystis nidulans R2).